A 150-amino-acid polypeptide reads, in one-letter code: Clitocypin (150 aa).

The protein belongs to the protease inhibitor I48 family. As to quaternary structure, homodimer. Uniformly expressed throughout the mature fruiting body (at mRNA and protein level).

In terms of biological role, binds and inhibits cysteine proteinases. Inhibits most strongly papain and cathepsin L, more weakly bromelain and cathepsin B while it is completely ineffective against cathepsin H. The protein is Clitocypin (Cnc1) of Clitocybe nebularis (Clouded agaric).